The following is a 235-amino-acid chain: NifU-like protein 2, chloroplastic (235 aa).

Residues 1-16 (MQLLTLNPAAISRTPP) constitute a chloroplast transit peptide.

The protein belongs to the NifU family. As to quaternary structure, homodimer; disulfide-linked. [2Fe-2S] cluster serves as cofactor. Predominantly expressed in leaves and floral stalks. Ubiquitous (at protein level).

The protein resides in the plastid. It is found in the chloroplast stroma. Functionally, molecular scaffold for [Fe-S] cluster assembly of chloroplastic iron-sulfur proteins. Required for biogenesis of ferredoxin, a major photosynthetic electron carrier containing [2Fe-2S] cluster. Required for the assembly of photosystem I complex. The polypeptide is NifU-like protein 2, chloroplastic (NIFU2) (Arabidopsis thaliana (Mouse-ear cress)).